Here is a 197-residue protein sequence, read N- to C-terminus: NADH-quinone oxidoreductase subunit C (197 aa).

This sequence belongs to the complex I 30 kDa subunit family. NDH-1 is composed of 14 different subunits. Subunits NuoB, C, D, E, F, and G constitute the peripheral sector of the complex.

Its subcellular location is the cell inner membrane. It catalyses the reaction a quinone + NADH + 5 H(+)(in) = a quinol + NAD(+) + 4 H(+)(out). Its function is as follows. NDH-1 shuttles electrons from NADH, via FMN and iron-sulfur (Fe-S) centers, to quinones in the respiratory chain. The immediate electron acceptor for the enzyme in this species is believed to be ubiquinone. Couples the redox reaction to proton translocation (for every two electrons transferred, four hydrogen ions are translocated across the cytoplasmic membrane), and thus conserves the redox energy in a proton gradient. The protein is NADH-quinone oxidoreductase subunit C of Caulobacter vibrioides (strain ATCC 19089 / CIP 103742 / CB 15) (Caulobacter crescentus).